Consider the following 190-residue polypeptide: Adenylate kinase (190 aa).

Residue 10-15 (AAGKGT) coordinates ATP. Positions 30–59 (STGDMLRAAIASGSELGQRVSGIMERGELV) are NMP. Residues Thr-31, Arg-36, 57–59 (ELV), 85–88 (GFPR), and Gln-92 each bind AMP. An LID region spans residues 126–136 (GRFAESGRADD). Arg-127 serves as a coordination point for ATP. 2 residues coordinate AMP: Arg-133 and Arg-144. Gly-172 is an ATP binding site.

The protein belongs to the adenylate kinase family. Monomer.

It localises to the cytoplasm. It catalyses the reaction AMP + ATP = 2 ADP. The protein operates within purine metabolism; AMP biosynthesis via salvage pathway; AMP from ADP: step 1/1. Its function is as follows. Catalyzes the reversible transfer of the terminal phosphate group between ATP and AMP. Plays an important role in cellular energy homeostasis and in adenine nucleotide metabolism. The polypeptide is Adenylate kinase (Phenylobacterium zucineum (strain HLK1)).